The sequence spans 445 residues: GTPase Der (445 aa).

2 EngA-type G domains span residues 3–167 (PVIA…YAGQ) and 180–353 (IKIA…AAAM). GTP contacts are provided by residues 9–16 (GRPNVGKS), 56–60 (DTGGF), 119–122 (NKAE), 186–193 (GRPNVGKS), 233–237 (DTAGL), and 298–301 (NKWD). One can recognise a KH-like domain in the interval 354–438 (AKLPTPKLTR…PLRIEFRSSN (85 aa)).

It belongs to the TRAFAC class TrmE-Era-EngA-EngB-Septin-like GTPase superfamily. EngA (Der) GTPase family. In terms of assembly, associates with the 50S ribosomal subunit.

Functionally, GTPase that plays an essential role in the late steps of ribosome biogenesis. The chain is GTPase Der from Burkholderia cenocepacia (strain HI2424).